Consider the following 590-residue polypeptide: Beta-fructofuranosidase, insoluble isoenzyme CWINV2 (590 aa).

The first 25 residues, 1–25 (MSAPKFGYVLLLIVLINISNNGVDA), serve as a signal peptide directing secretion. Residues 59–62 (WIND), glutamine 78, and tryptophan 86 contribute to the substrate site. The active site involves aspartate 62. An N-linked (GlcNAc...) asparagine glycan is attached at asparagine 118. Residue 121–122 (WS) participates in substrate binding. N-linked (GlcNAc...) asparagine glycosylation is found at asparagine 143 and asparagine 180. Residues 185–186 (RD), glutamate 241, and aspartate 275 contribute to the substrate site. Asparagine 335 carries N-linked (GlcNAc...) asparagine glycosylation. A disulfide bridge links cysteine 435 with cysteine 483. Residue asparagine 564 is glycosylated (N-linked (GlcNAc...) asparagine).

The protein belongs to the glycosyl hydrolase 32 family. Expressed in flowers, and seeds.

Its subcellular location is the secreted. It localises to the extracellular space. It is found in the apoplast. The protein resides in the cell wall. The enzyme catalyses Hydrolysis of terminal non-reducing beta-D-fructofuranoside residues in beta-D-fructofuranosides.. This Arabidopsis thaliana (Mouse-ear cress) protein is Beta-fructofuranosidase, insoluble isoenzyme CWINV2 (CWINV2).